The primary structure comprises 154 residues: NADPH-dependent 7-cyano-7-deazaguanine reductase (154 aa).

The span at 1–21 (MPNTDVSSLSMLGHQTETASS) shows a compositional bias: polar residues. Residues 1-26 (MPNTDVSSLSMLGHQTETASSPEEAV) are disordered. Cys52 (thioimide intermediate) is an active-site residue. Asp59 acts as the Proton donor in catalysis. Residues 74–76 (VES) and 93–94 (HE) each bind substrate.

It belongs to the GTP cyclohydrolase I family. QueF type 1 subfamily.

It is found in the cytoplasm. The enzyme catalyses 7-aminomethyl-7-carbaguanine + 2 NADP(+) = 7-cyano-7-deazaguanine + 2 NADPH + 3 H(+). Its pathway is tRNA modification; tRNA-queuosine biosynthesis. In terms of biological role, catalyzes the NADPH-dependent reduction of 7-cyano-7-deazaguanine (preQ0) to 7-aminomethyl-7-deazaguanine (preQ1). This is NADPH-dependent 7-cyano-7-deazaguanine reductase from Rhizobium etli (strain ATCC 51251 / DSM 11541 / JCM 21823 / NBRC 15573 / CFN 42).